Consider the following 461-residue polypeptide: Argininosuccinate lyase (461 aa).

The protein belongs to the lyase 1 family. Argininosuccinate lyase subfamily.

The protein localises to the cytoplasm. It catalyses the reaction 2-(N(omega)-L-arginino)succinate = fumarate + L-arginine. Its pathway is amino-acid biosynthesis; L-arginine biosynthesis; L-arginine from L-ornithine and carbamoyl phosphate: step 3/3. In Bacillus subtilis (strain 168), this protein is Argininosuccinate lyase.